Reading from the N-terminus, the 439-residue chain is O-fucosyltransferase 13 (439 aa).

Residues 8 to 28 (PLFVFVLTFSLLLVVILLSPS) form a helical; Signal-anchor for type II membrane protein membrane-spanning segment. N-linked (GlcNAc...) asparagine glycosylation is found at N104 and N119. A substrate-binding site is contributed by 238–240 (HLR). N293 carries N-linked (GlcNAc...) asparagine glycosylation.

This sequence belongs to the glycosyltransferase GT106 family.

It is found in the membrane. It participates in glycan metabolism. In Arabidopsis thaliana (Mouse-ear cress), this protein is O-fucosyltransferase 13.